The primary structure comprises 338 residues: Lipoyl synthase (338 aa).

The disordered stretch occupies residues 1-24 (MTTVQEAVPNLIPTQDATPRPAPK). The [4Fe-4S] cluster site is built by Cys84, Cys89, Cys95, Cys110, Cys114, Cys117, and Ser324. One can recognise a Radical SAM core domain in the interval 96–313 (FSGGTATFMI…AEEGYKMGFK (218 aa)).

This sequence belongs to the radical SAM superfamily. Lipoyl synthase family. [4Fe-4S] cluster serves as cofactor.

It localises to the cytoplasm. The catalysed reaction is [[Fe-S] cluster scaffold protein carrying a second [4Fe-4S](2+) cluster] + N(6)-octanoyl-L-lysyl-[protein] + 2 oxidized [2Fe-2S]-[ferredoxin] + 2 S-adenosyl-L-methionine + 4 H(+) = [[Fe-S] cluster scaffold protein] + N(6)-[(R)-dihydrolipoyl]-L-lysyl-[protein] + 4 Fe(3+) + 2 hydrogen sulfide + 2 5'-deoxyadenosine + 2 L-methionine + 2 reduced [2Fe-2S]-[ferredoxin]. It functions in the pathway protein modification; protein lipoylation via endogenous pathway; protein N(6)-(lipoyl)lysine from octanoyl-[acyl-carrier-protein]: step 2/2. Functionally, catalyzes the radical-mediated insertion of two sulfur atoms into the C-6 and C-8 positions of the octanoyl moiety bound to the lipoyl domains of lipoate-dependent enzymes, thereby converting the octanoylated domains into lipoylated derivatives. The chain is Lipoyl synthase from Pseudomonas putida (strain ATCC 700007 / DSM 6899 / JCM 31910 / BCRC 17059 / LMG 24140 / F1).